A 114-amino-acid chain; its full sequence is T cell receptor beta variable 5-1 (114 aa).

A signal peptide spans 1 to 21; it reads MGSRLLCWVLLCLLGAGPVKA. In terms of domain architecture, Ig-like spans 22-114; sequence GVTQTPRYLI…SALYLCASSL (93 aa). Cys42 and Cys110 are disulfide-bonded. An N-linked (GlcNAc...) asparagine glycan is attached at Asn96.

Alpha-beta TR is a heterodimer composed of an alpha and beta chain; disulfide-linked. The alpha-beta TR is associated with the transmembrane signaling CD3 coreceptor proteins to form the TR-CD3 (TcR or TCR). The assembly of alpha-beta TR heterodimers with CD3 occurs in the endoplasmic reticulum where a single alpha-beta TR heterodimer associates with one CD3D-CD3E heterodimer, one CD3G-CD3E heterodimer and one CD247 homodimer forming a stable octameric structure. CD3D-CD3E and CD3G-CD3E heterodimers preferentially associate with TR alpha and TR beta chains, respectively. The association of the CD247 homodimer is the last step of TcR assembly in the endoplasmic reticulum and is required for transport to the cell surface.

The protein localises to the cell membrane. Functionally, v region of the variable domain of T cell receptor (TR) beta chain that participates in the antigen recognition. Alpha-beta T cell receptors are antigen specific receptors which are essential to the immune response and are present on the cell surface of T lymphocytes. Recognize peptide-major histocompatibility (MH) (pMH) complexes that are displayed by antigen presenting cells (APC), a prerequisite for efficient T cell adaptive immunity against pathogens. Binding of alpha-beta TR to pMH complex initiates TR-CD3 clustering on the cell surface and intracellular activation of LCK that phosphorylates the ITAM motifs of CD3G, CD3D, CD3E and CD247 enabling the recruitment of ZAP70. In turn ZAP70 phosphorylates LAT, which recruits numerous signaling molecules to form the LAT signalosome. The LAT signalosome propagates signal branching to three major signaling pathways, the calcium, the mitogen-activated protein kinase (MAPK) kinase and the nuclear factor NF-kappa-B (NF-kB) pathways, leading to the mobilization of transcription factors that are critical for gene expression and essential for T cell growth and differentiation. The T cell repertoire is generated in the thymus, by V-(D)-J rearrangement. This repertoire is then shaped by intrathymic selection events to generate a peripheral T cell pool of self-MH restricted, non-autoaggressive T cells. Post-thymic interaction of alpha-beta TR with the pMH complexes shapes TR structural and functional avidity. The protein is T cell receptor beta variable 5-1 of Homo sapiens (Human).